We begin with the raw amino-acid sequence, 417 residues long: L-rhamnose isomerase (417 aa).

Positions 260, 292, and 294 each coordinate Mn(2+).

It belongs to the rhamnose isomerase family. Requires Mn(2+) as cofactor.

The protein resides in the cytoplasm. It catalyses the reaction L-rhamnopyranose = L-rhamnulose. Its pathway is carbohydrate degradation; L-rhamnose degradation; glycerone phosphate from L-rhamnose: step 1/3. In terms of biological role, catalyzes the interconversion of L-rhamnose and L-rhamnulose. This Mannheimia succiniciproducens (strain KCTC 0769BP / MBEL55E) protein is L-rhamnose isomerase.